A 155-amino-acid chain; its full sequence is Large ribosomal subunit protein uL13 (155 aa).

This sequence belongs to the universal ribosomal protein uL13 family. As to quaternary structure, part of the 50S ribosomal subunit.

Its function is as follows. This protein is one of the early assembly proteins of the 50S ribosomal subunit, although it is not seen to bind rRNA by itself. It is important during the early stages of 50S assembly. In Rickettsia akari (strain Hartford), this protein is Large ribosomal subunit protein uL13.